We begin with the raw amino-acid sequence, 358 residues long: Alanine racemase (358 aa).

K34 functions as the Proton acceptor; specific for D-alanine in the catalytic mechanism. Residue K34 is modified to N6-(pyridoxal phosphate)lysine. Position 129 (R129) interacts with substrate. The active-site Proton acceptor; specific for L-alanine is Y254. M302 contributes to the substrate binding site.

This sequence belongs to the alanine racemase family. The cofactor is pyridoxal 5'-phosphate.

It catalyses the reaction L-alanine = D-alanine. It functions in the pathway amino-acid biosynthesis; D-alanine biosynthesis; D-alanine from L-alanine: step 1/1. Functionally, catalyzes the interconversion of L-alanine and D-alanine. May also act on other amino acids. This is Alanine racemase (alr) from Vibrio atlanticus (strain LGP32) (Vibrio splendidus (strain Mel32)).